The sequence spans 207 residues: MSGLLFVVSAASGTGKTSLVKALLERVTNLHVSVSHTTRGQRPGELDGVHYHFTTKENFLSQVEDNGFIEYAEVFGNYYGTSQATVKQQLAKGHDVLLEIDWQGAQQVRRIFPESKQIFILPPSQFDLRQRLSNRGTDAVDVIEHRLSCAVEDMQQYVNFDYIIINDDFNKALHDLESVITANRLMLAQQVQRHHKLIEQLITPNSE.

The Guanylate kinase-like domain maps to 3-181 (GLLFVVSAAS…ALHDLESVIT (179 aa)). 10-17 (AASGTGKT) lines the ATP pocket.

It belongs to the guanylate kinase family.

The protein resides in the cytoplasm. It carries out the reaction GMP + ATP = GDP + ADP. Its function is as follows. Essential for recycling GMP and indirectly, cGMP. This is Guanylate kinase from Acinetobacter baylyi (strain ATCC 33305 / BD413 / ADP1).